The sequence spans 403 residues: Basic leucine zipper 25 (403 aa).

Disordered regions lie at residues 13 to 128 and 156 to 259; these read SFWP…APVV and VKPE…EFDT. Positions 24–33 are enriched in low complexity; it reads PGSSSTPSPT. A compositionally biased stretch (polar residues) spans 56–69; it reads LSGSDSSPTTNTIE. Low complexity-rich tracts occupy residues 115–128 and 161–174; these read APSS…APVV and SSAS…AQGS. Polar residues predominate over residues 175-195; sequence IVAQTSPGASSVRFSPTTSTQ. Over residues 212–226 the composition is skewed to acidic residues; the sequence is DSDDDDLDGDADNGD. The residue at position 213 (Ser-213) is a Phosphoserine. The 64-residue stretch at 229–292 folds into the bZIP domain; the sequence is DVKRARRMLS…DAAAVDNRIL (64 aa). Residues 231–250 form a basic motif region; it reads KRARRMLSNRESARRSRRRK. A Nuclear localization signal motif is present at residues 233 to 240; the sequence is ARRMLSNR. The interval 264–271 is leucine-zipper; sequence LRAEHSTL. A compositionally biased stretch (low complexity) spans 332–345; that stretch reads NTPSASSSIPPNSN. 2 disordered regions span residues 332 to 361 and 380 to 403; these read NTPS…SAGL and EGMQ…NHKH. The span at 351-361 shows a compositional bias: polar residues; the sequence is ANSSTNTSAGL.

This sequence belongs to the bZIP family. Homodimer. Forms a heterodimer with BZIP1, BZIP1, BZIP2, BZIP9, BZIP11, BZIP44, BZIP53 and BZIP63. Interacts with ABI3 and forms a complex made of ABI3, BZIP53 and BZIP25. As to expression, expressed in roots, shoots, stems, leaves, stipulae, siliques, seeds, pollen, and flowers.

It localises to the nucleus. Functionally, transcription factor that binds to the 5'-ACGT-3' box, especially present in G-box-like motif (5'-CCACGTGGCC-3'), ABRE elements, of seed storage protein (SSP) encoding gene promoters (e.g. At2S and CRU3) and promotes their expression in seeds when in complex with ABI3 and BZIP53. The sequence is that of Basic leucine zipper 25 (BZIP25) from Arabidopsis thaliana (Mouse-ear cress).